We begin with the raw amino-acid sequence, 593 residues long: Aspartate--tRNA ligase (593 aa).

Glu173 serves as a coordination point for L-aspartate. The aspartate stretch occupies residues 197-200 (QLFK). L-aspartate is bound at residue Arg219. Residues 219–221 (RDE) and Gln228 contribute to the ATP site. An L-aspartate-binding site is contributed by His448. Glu482 lines the ATP pocket. L-aspartate is bound at residue Arg489. 534–537 (GLDR) is a binding site for ATP.

It belongs to the class-II aminoacyl-tRNA synthetase family. Type 1 subfamily. In terms of assembly, homodimer.

It is found in the cytoplasm. The enzyme catalyses tRNA(Asp) + L-aspartate + ATP = L-aspartyl-tRNA(Asp) + AMP + diphosphate. Catalyzes the attachment of L-aspartate to tRNA(Asp) in a two-step reaction: L-aspartate is first activated by ATP to form Asp-AMP and then transferred to the acceptor end of tRNA(Asp). This is Aspartate--tRNA ligase from Shewanella denitrificans (strain OS217 / ATCC BAA-1090 / DSM 15013).